The primary structure comprises 355 residues: Tabersonine 16-O-methyltransferase (355 aa).

S-adenosyl-L-methionine is bound by residues 198-201 (IGGG), D222, 222-223 (DL), 242-243 (DM), and K256. H260 (proton acceptor) is an active-site residue.

This sequence belongs to the class I-like SAM-binding methyltransferase superfamily. Cation-independent O-methyltransferase family. COMT subfamily. As to quaternary structure, homodimer. Expressed in leaves and flowers. Detected in stems and roots. In leaves, expressed in epidermal cells.

It localises to the cytoplasm. The enzyme catalyses 16-hydroxytabersonine + S-adenosyl-L-methionine = 16-methoxytabersonine + S-adenosyl-L-homocysteine + H(+). Its pathway is alkaloid biosynthesis; vindoline biosynthesis. Functionally, 16-O-methyltransferase involved in the biosynthesis of vindoline. Highly specific for 16-hydroxytabersonine. No activity with tabersonine, 3-hydroxytyramine, 4-hydroxytyramine, 5-hydroxytryptamine (5HT), 2,3-dihydro-3-hydroxytabersonine, lochnericine, hoerhammericine, 16-hydroxy-2,3-dihydro-3-hydroxytabersonine, 16-hydroxylochnericine, 16-hydroxyhoerhammericine, quercetin, kaempferol and caffeic acid as substrates. The protein is Tabersonine 16-O-methyltransferase of Catharanthus roseus (Madagascar periwinkle).